The following is a 475-amino-acid chain: Ribulose bisphosphate carboxylase large chain (475 aa).

Residues 1 to 2 constitute a propeptide that is removed on maturation; sequence MS. The residue at position 3 (proline 3) is an N-acetylproline. Lysine 14 is subject to N6,N6,N6-trimethyllysine. Positions 123 and 173 each coordinate substrate. Lysine 175 (proton acceptor) is an active-site residue. Lysine 177 is a binding site for substrate. Residues lysine 201, aspartate 203, and glutamate 204 each coordinate Mg(2+). Lysine 201 is modified (N6-carboxylysine). Histidine 294 functions as the Proton acceptor in the catalytic mechanism. Substrate-binding residues include arginine 295, histidine 327, and serine 379.

This sequence belongs to the RuBisCO large chain family. Type I subfamily. Heterohexadecamer of 8 large chains and 8 small chains; disulfide-linked. The disulfide link is formed within the large subunit homodimers. Requires Mg(2+) as cofactor. The disulfide bond which can form in the large chain dimeric partners within the hexadecamer appears to be associated with oxidative stress and protein turnover.

Its subcellular location is the plastid. The protein resides in the chloroplast. The enzyme catalyses 2 (2R)-3-phosphoglycerate + 2 H(+) = D-ribulose 1,5-bisphosphate + CO2 + H2O. It carries out the reaction D-ribulose 1,5-bisphosphate + O2 = 2-phosphoglycolate + (2R)-3-phosphoglycerate + 2 H(+). Functionally, ruBisCO catalyzes two reactions: the carboxylation of D-ribulose 1,5-bisphosphate, the primary event in carbon dioxide fixation, as well as the oxidative fragmentation of the pentose substrate in the photorespiration process. Both reactions occur simultaneously and in competition at the same active site. The polypeptide is Ribulose bisphosphate carboxylase large chain (Pinus krempfii (Krempf's pine)).